Reading from the N-terminus, the 1183-residue chain is DNA-directed RNA polymerase subunit beta (1183 aa).

It belongs to the RNA polymerase beta chain family. As to quaternary structure, the RNAP catalytic core consists of 2 alpha, 1 beta, 1 beta' and 1 omega subunit. When a sigma factor is associated with the core the holoenzyme is formed, which can initiate transcription.

It carries out the reaction RNA(n) + a ribonucleoside 5'-triphosphate = RNA(n+1) + diphosphate. DNA-dependent RNA polymerase catalyzes the transcription of DNA into RNA using the four ribonucleoside triphosphates as substrates. The sequence is that of DNA-directed RNA polymerase subunit beta from Staphylococcus aureus (strain Mu3 / ATCC 700698).